A 75-amino-acid chain; its full sequence is uncharacterized protein (75 aa).

A LysM domain is found at 29 to 72 (EVYHVESGDTLWTIAKSFEIPVQQLMNLNKLSSDRIYPGQIIKI).

This is an uncharacterized protein from Bacillus subtilis (strain 168).